We begin with the raw amino-acid sequence, 475 residues long: 1-aminocyclopropane-1-carboxylate synthase CMA101 (475 aa).

N6-(pyridoxal phosphate)lysine is present on Lys272.

The protein belongs to the class-I pyridoxal-phosphate-dependent aminotransferase family. In terms of assembly, homodimer. Pyridoxal 5'-phosphate serves as cofactor.

It carries out the reaction S-adenosyl-L-methionine = 1-aminocyclopropane-1-carboxylate + S-methyl-5'-thioadenosine + H(+). It functions in the pathway alkene biosynthesis; ethylene biosynthesis via S-adenosyl-L-methionine; ethylene from S-adenosyl-L-methionine: step 1/2. In terms of biological role, catalyzes the formation of 1-aminocyclopropane-1-carboxylate, a direct precursor of ethylene in higher plants. In Cucurbita maxima (Pumpkin), this protein is 1-aminocyclopropane-1-carboxylate synthase CMA101 (ACS2).